The following is a 448-amino-acid chain: uncharacterized protein (448 aa).

Residues 19-41 (LGLLVPFLLLLFSCTNTVGYGVL) form a helical membrane-spanning segment. The SH3b domain occupies 105–181 (YSYATSVLDG…CFSHGLSLFD (77 aa)).

The protein localises to the membrane. This is an uncharacterized protein from Treponema pallidum (strain Nichols).